Reading from the N-terminus, the 515-residue chain is Alpha-1B adrenergic receptor (515 aa).

Topologically, residues methionine 1 to alanine 45 are extracellular. Asparagine 10, asparagine 24, and asparagine 34 each carry an N-linked (GlcNAc...) asparagine glycan. Residues isoleucine 46–valine 70 traverse the membrane as a helical segment. Residues alanine 71–phenylalanine 83 lie on the Cytoplasmic side of the membrane. Residues isoleucine 84 to leucine 105 traverse the membrane as a helical segment. At glutamate 106–arginine 115 the chain is on the extracellular side. The helical transmembrane segment at isoleucine 116–isoleucine 141 threads the bilayer. The cysteines at positions 118 and 195 are disulfide-linked. The Cytoplasmic portion of the chain corresponds to aspartate 142–lysine 161. A helical membrane pass occupies residues alanine 162–tryptophan 184. The Extracellular segment spans residues lysine 185–proline 201. Residues phenylalanine 202–cysteine 224 form a helical membrane-spanning segment. Residues arginine 225–threonine 295 are Cytoplasmic-facing. Phosphothreonine is present on threonine 264. The chain crosses the membrane as a helical span at residues leucine 296–leucine 319. Residues phenylalanine 320–proline 326 lie on the Extracellular side of the membrane. The helical transmembrane segment at aspartate 327–serine 351 threads the bilayer. At serine 352–phenylalanine 515 the chain is on the cytoplasmic side. Residue cysteine 365 is the site of S-palmitoyl cysteine attachment. The Nuclear localization signal motif lies at arginine 368–arginine 378. 2 disordered regions span residues glycine 392 to tyrosine 428 and leucine 473 to phenylalanine 515. The span at serine 410 to proline 424 shows a compositional bias: polar residues.

This sequence belongs to the G-protein coupled receptor 1 family. Adrenergic receptor subfamily. ADRA1B sub-subfamily. As to quaternary structure, homo- and heterooligomer. Heterooligomerizes with ADRA1B homooligomers in cardiac myocytes. Interacts with CAVIN4.

Its subcellular location is the nucleus membrane. The protein resides in the cell membrane. It is found in the cytoplasm. The protein localises to the membrane. It localises to the caveola. Functionally, this alpha-adrenergic receptor mediates its action by association with G proteins that activate a phosphatidylinositol-calcium second messenger system. Its effect is mediated by G(q) and G(11) proteins. Nuclear ADRA1A-ADRA1B heterooligomers regulate phenylephrine (PE)-stimulated ERK signaling in cardiac myocytes. In Mesocricetus auratus (Golden hamster), this protein is Alpha-1B adrenergic receptor (ADRA1B).